Reading from the N-terminus, the 223-residue chain is Rho-related protein racE (223 aa).

18–25 is a GTP binding site; the sequence is GDGAVGKT. Residues 40–48 carry the Effector region motif; that stretch reads YVPTVFENY. GTP-binding positions include 65-69 and 123-126; these read DTAGQ and TKID. Residues 187–223 form a disordered region; that stretch reads GMDKKSQDGSSSASGVPSGDKPTKGKAGKKKSGCIIL. Positions 210–223 are enriched in basic residues; the sequence is KGKAGKKKSGCIIL. Position 220 is a cysteine methyl ester (C220). C220 carries S-geranylgeranyl cysteine lipidation. Positions 221-223 are cleaved as a propeptide — removed in mature form; it reads IIL.

It belongs to the small GTPase superfamily. Rho family. As to quaternary structure, interacts with rgaA.

It is found in the cell membrane. Functionally, specifically required for cytokinesis. The protein is Rho-related protein racE (racE) of Dictyostelium discoideum (Social amoeba).